Consider the following 597-residue polypeptide: Adenine deaminase 2 (597 aa).

The protein belongs to the metallo-dependent hydrolases superfamily. Adenine deaminase family. Mn(2+) serves as cofactor.

The catalysed reaction is adenine + H2O + H(+) = hypoxanthine + NH4(+). This chain is Adenine deaminase 2, found in Agrobacterium fabrum (strain C58 / ATCC 33970) (Agrobacterium tumefaciens (strain C58)).